A 169-amino-acid chain; its full sequence is Cell division inhibitor SulA (169 aa).

The segment covering 1–16 (MFTSAHANRSPLTSAS) has biased composition (polar residues). A disordered region spans residues 1 to 20 (MFTSAHANRSPLTSASVRRP). The interval 106–112 (ALRTGNY) is ftsZ binding. Residues 162–169 (KIHSNLYH) are lon protease binding.

This sequence belongs to the SulA family. As to quaternary structure, interacts with FtsZ. In terms of processing, is rapidly cleaved and degraded by the Lon protease once DNA damage is repaired.

Component of the SOS system and an inhibitor of cell division. Accumulation of SulA causes rapid cessation of cell division and the appearance of long, non-septate filaments. In the presence of GTP, binds a polymerization-competent form of FtsZ in a 1:1 ratio, thus inhibiting FtsZ polymerization and therefore preventing it from participating in the assembly of the Z ring. This mechanism prevents the premature segregation of damaged DNA to daughter cells during cell division. In Klebsiella aerogenes (Enterobacter aerogenes), this protein is Cell division inhibitor SulA.